The primary structure comprises 340 residues: Ketol-acid reductoisomerase (NADP(+)) (340 aa).

In terms of domain architecture, KARI N-terminal Rossmann spans 1–182; sequence MRVYYDRDCD…GGGRSGIIET (182 aa). Residues 24 to 27, R48, S51, S53, and 83 to 86 contribute to the NADP(+) site; these read YGSQ and DELQ. H108 is a catalytic residue. An NADP(+)-binding site is contributed by G134. The 147-residue stretch at 183–329 folds into the KARI C-terminal knotted domain; the sequence is NFREECETDL…AKLREMMPWI (147 aa). Residues D191, E195, E227, and E231 each contribute to the Mg(2+) site. Substrate is bound at residue S252.

This sequence belongs to the ketol-acid reductoisomerase family. It depends on Mg(2+) as a cofactor.

It catalyses the reaction (2R)-2,3-dihydroxy-3-methylbutanoate + NADP(+) = (2S)-2-acetolactate + NADPH + H(+). It carries out the reaction (2R,3R)-2,3-dihydroxy-3-methylpentanoate + NADP(+) = (S)-2-ethyl-2-hydroxy-3-oxobutanoate + NADPH + H(+). The protein operates within amino-acid biosynthesis; L-isoleucine biosynthesis; L-isoleucine from 2-oxobutanoate: step 2/4. It participates in amino-acid biosynthesis; L-valine biosynthesis; L-valine from pyruvate: step 2/4. Functionally, involved in the biosynthesis of branched-chain amino acids (BCAA). Catalyzes an alkyl-migration followed by a ketol-acid reduction of (S)-2-acetolactate (S2AL) to yield (R)-2,3-dihydroxy-isovalerate. In the isomerase reaction, S2AL is rearranged via a Mg-dependent methyl migration to produce 3-hydroxy-3-methyl-2-ketobutyrate (HMKB). In the reductase reaction, this 2-ketoacid undergoes a metal-dependent reduction by NADPH to yield (R)-2,3-dihydroxy-isovalerate. The protein is Ketol-acid reductoisomerase (NADP(+)) of Ruegeria sp. (strain TM1040) (Silicibacter sp.).